The primary structure comprises 271 residues: tRNA (guanine-N(7)-)-methyltransferase (271 aa).

The interval 1–52 is disordered; it reads MSDSHHTPEAASASLRHVRAKGEPRFPDGPKADPAGSHFERRIRSFQPRRSR. The segment covering 20-31 has biased composition (basic and acidic residues); that stretch reads AKGEPRFPDGPK. Residues glutamate 93, aspartate 118, aspartate 145, and aspartate 168 each coordinate S-adenosyl-L-methionine. Aspartate 168 is a catalytic residue. Substrate contacts are provided by residues lysine 172, aspartate 204, and 241 to 244; that span reads TRFE.

This sequence belongs to the class I-like SAM-binding methyltransferase superfamily. TrmB family.

It carries out the reaction guanosine(46) in tRNA + S-adenosyl-L-methionine = N(7)-methylguanosine(46) in tRNA + S-adenosyl-L-homocysteine. It functions in the pathway tRNA modification; N(7)-methylguanine-tRNA biosynthesis. Its function is as follows. Catalyzes the formation of N(7)-methylguanine at position 46 (m7G46) in tRNA. The chain is tRNA (guanine-N(7)-)-methyltransferase from Streptomyces coelicolor (strain ATCC BAA-471 / A3(2) / M145).